We begin with the raw amino-acid sequence, 496 residues long: Hemophilin secretion modulator (496 aa).

The first 19 residues, 1 to 19 (MKRTLLCCLTLLSCPFLYA), serve as a signal peptide directing secretion. Transmembrane regions (beta stranded) follow at residues 198-208 (WQGSVSAGYTY), 253-263 (DYEASLIKRYA), 268-277 (HGVALRALAF), 291-301 (TININAGYSYF), 305-315 (NQIGVSPLFEH), 327-337 (WGARAEWMHFI), 341-351 (KAFKLEAESKD), 365-374 (SSAFATFWKI), 380-389 (TFFGGLDVLD), 403-413 (QGVRLGLSKSW), 418-427 (NTTLLSSYRW), 446-455 (QNHTFVVQMP), 462-472 (MTPNLTYRYNH), and 486-495 (HNISFKLEHR).

This sequence belongs to the Slam family.

It is found in the cell outer membrane. Part of a high affinity heme acquisition system. Mediates the secretion of the hemophilin HphA across the outer membrane into the extracellular environment. Plays a supporting role for full virulence. In Acinetobacter baumannii, this protein is Hemophilin secretion modulator.